A 163-amino-acid polypeptide reads, in one-letter code: Ribosome maturation factor RimM (163 aa).

One can recognise a PRC barrel domain in the interval 92–162 (EDEFYVADLV…AGRAVVRPPE (71 aa)).

The protein belongs to the RimM family. In terms of assembly, binds ribosomal protein uS19.

The protein localises to the cytoplasm. Its function is as follows. An accessory protein needed during the final step in the assembly of 30S ribosomal subunit, possibly for assembly of the head region. Essential for efficient processing of 16S rRNA. May be needed both before and after RbfA during the maturation of 16S rRNA. It has affinity for free ribosomal 30S subunits but not for 70S ribosomes. This Rubrobacter xylanophilus (strain DSM 9941 / JCM 11954 / NBRC 16129 / PRD-1) protein is Ribosome maturation factor RimM.